A 92-amino-acid chain; its full sequence is Transcription factor ILI6 (92 aa).

The segment at Met-1–Gln-20 is disordered. Residues Arg-5–Leu-59 enclose the bHLH domain.

This sequence belongs to the bHLH protein family. In terms of assembly, interacts with APG.

The protein localises to the nucleus. In terms of biological role, atypical and probable non DNA-binding bHLH transcription factor that acts as a positive regulator of grain size. Binds the transcription repressor APG and forms a heterodimer of antagonistic bHLH transcription factors that regulates grain length and weight by controlling cell elongation in lemma and palea. May be involved in the control of lamina inclination through brassinosteroid signaling pathway. The sequence is that of Transcription factor ILI6 (ILI6) from Oryza sativa subsp. indica (Rice).